The chain runs to 423 residues: Adenylosuccinate synthetase (423 aa).

GTP-binding positions include 11 to 17 (GDEGKGK) and 39 to 41 (GHT). Catalysis depends on Asp-12, which acts as the Proton acceptor. The Mg(2+) site is built by Asp-12 and Gly-39. IMP contacts are provided by residues 12–15 (DEGK), 37–40 (NAGH), Thr-129, Arg-143, Asn-219, Thr-234, and Arg-298. His-40 functions as the Proton donor in the catalytic mechanism. Residue 294-300 (VTTGRRR) coordinates substrate. GTP is bound by residues Arg-300, 326–328 (KLD), and 411–413 (GTG).

The protein belongs to the adenylosuccinate synthetase family. As to quaternary structure, homodimer. Mg(2+) serves as cofactor.

The protein localises to the cytoplasm. The catalysed reaction is IMP + L-aspartate + GTP = N(6)-(1,2-dicarboxyethyl)-AMP + GDP + phosphate + 2 H(+). It participates in purine metabolism; AMP biosynthesis via de novo pathway; AMP from IMP: step 1/2. Its function is as follows. Plays an important role in the de novo pathway and in the salvage pathway of purine nucleotide biosynthesis. Catalyzes the first committed step in the biosynthesis of AMP from IMP. The sequence is that of Adenylosuccinate synthetase from Penicillium rubens (strain ATCC 28089 / DSM 1075 / NRRL 1951 / Wisconsin 54-1255) (Penicillium chrysogenum).